We begin with the raw amino-acid sequence, 353 residues long: Ion-translocating oxidoreductase complex subunit D (353 aa).

Transmembrane regions (helical) follow at residues 20–40, 44–64, 77–108, and 123–143; these read IMLL…YYFG, IIQV…ILHL, SALL…AIII, and PAMV…TSWL. Position 187 is an FMN phosphoryl threonine (threonine 187). 4 helical membrane passes run 214 to 234, 242 to 262, 267 to 287, and 301 to 318; these read VIAG…GVFL, WHIP…GWLL, LVTP…FFIA, and LLYG…RSYG.

This sequence belongs to the NqrB/RnfD family. The complex is composed of six subunits: RnfA, RnfB, RnfC, RnfD, RnfE and RnfG. It depends on FMN as a cofactor.

The protein resides in the cell inner membrane. Part of a membrane-bound complex that couples electron transfer with translocation of ions across the membrane. This is Ion-translocating oxidoreductase complex subunit D from Erwinia tasmaniensis (strain DSM 17950 / CFBP 7177 / CIP 109463 / NCPPB 4357 / Et1/99).